The following is a 394-amino-acid chain: tRNA-specific 2-thiouridylase MnmA (394 aa).

ATP-binding positions include 30 to 37 (AMSGGVDS) and Leu-56. Cys-124 serves as the catalytic Nucleophile. A disulfide bridge connects residues Cys-124 and Cys-220. Gly-148 contributes to the ATP binding site. Residues 170-172 (RDQ) form an interaction with tRNA region. The active-site Cysteine persulfide intermediate is Cys-220.

This sequence belongs to the MnmA/TRMU family.

The protein localises to the cytoplasm. The enzyme catalyses S-sulfanyl-L-cysteinyl-[protein] + uridine(34) in tRNA + AH2 + ATP = 2-thiouridine(34) in tRNA + L-cysteinyl-[protein] + A + AMP + diphosphate + H(+). Its function is as follows. Catalyzes the 2-thiolation of uridine at the wobble position (U34) of tRNA, leading to the formation of s(2)U34. This is tRNA-specific 2-thiouridylase MnmA from Hyphomonas neptunium (strain ATCC 15444).